Here is a 421-residue protein sequence, read N- to C-terminus: Gamma-glutamyl phosphate reductase (421 aa).

It belongs to the gamma-glutamyl phosphate reductase family.

Its subcellular location is the cytoplasm. The enzyme catalyses L-glutamate 5-semialdehyde + phosphate + NADP(+) = L-glutamyl 5-phosphate + NADPH + H(+). It participates in amino-acid biosynthesis; L-proline biosynthesis; L-glutamate 5-semialdehyde from L-glutamate: step 2/2. Its function is as follows. Catalyzes the NADPH-dependent reduction of L-glutamate 5-phosphate into L-glutamate 5-semialdehyde and phosphate. The product spontaneously undergoes cyclization to form 1-pyrroline-5-carboxylate. This Acinetobacter baumannii (strain ATCC 17978 / DSM 105126 / CIP 53.77 / LMG 1025 / NCDC KC755 / 5377) protein is Gamma-glutamyl phosphate reductase.